A 500-amino-acid polypeptide reads, in one-letter code: Bifunctional protein GlmU (500 aa).

Residues 1 to 242 (MPVQTAVVVL…SAKVAGANDR (242 aa)) form a pyrophosphorylase region. UDP-N-acetyl-alpha-D-glucosamine-binding positions include 10-13 (LAAG), Lys-24, Gln-81, and 86-87 (GT). Asp-112 is a Mg(2+) binding site. Gly-151, Glu-167, Asn-182, and Asn-240 together coordinate UDP-N-acetyl-alpha-D-glucosamine. Residue Asn-240 coordinates Mg(2+). A linker region spans residues 243–263 (VQLSRLAAELNRRTVENWMRA). The N-acetyltransferase stretch occupies residues 264 to 500 (GVTVVDPSTT…KQDLKDGIEQ (237 aa)). Residues Arg-345 and Lys-363 each contribute to the UDP-N-acetyl-alpha-D-glucosamine site. The Proton acceptor role is filled by His-375. UDP-N-acetyl-alpha-D-glucosamine contacts are provided by Tyr-378 and Asn-389. Acetyl-CoA is bound by residues Ala-392, 398 to 399 (NY), Ser-417, and Ala-435. The tract at residues 459 to 500 (DGWVQRNRPGTPAAEAASAAGPHHSSDLHETEKQDLKDGIEQ) is disordered. Residues 482–500 (HSSDLHETEKQDLKDGIEQ) show a composition bias toward basic and acidic residues.

In the N-terminal section; belongs to the N-acetylglucosamine-1-phosphate uridyltransferase family. It in the C-terminal section; belongs to the transferase hexapeptide repeat family. As to quaternary structure, homotrimer. Requires Mg(2+) as cofactor.

It is found in the cytoplasm. The enzyme catalyses alpha-D-glucosamine 1-phosphate + acetyl-CoA = N-acetyl-alpha-D-glucosamine 1-phosphate + CoA + H(+). It carries out the reaction N-acetyl-alpha-D-glucosamine 1-phosphate + UTP + H(+) = UDP-N-acetyl-alpha-D-glucosamine + diphosphate. Its pathway is nucleotide-sugar biosynthesis; UDP-N-acetyl-alpha-D-glucosamine biosynthesis; N-acetyl-alpha-D-glucosamine 1-phosphate from alpha-D-glucosamine 6-phosphate (route II): step 2/2. It functions in the pathway nucleotide-sugar biosynthesis; UDP-N-acetyl-alpha-D-glucosamine biosynthesis; UDP-N-acetyl-alpha-D-glucosamine from N-acetyl-alpha-D-glucosamine 1-phosphate: step 1/1. It participates in bacterial outer membrane biogenesis; LPS lipid A biosynthesis. Catalyzes the last two sequential reactions in the de novo biosynthetic pathway for UDP-N-acetylglucosamine (UDP-GlcNAc). The C-terminal domain catalyzes the transfer of acetyl group from acetyl coenzyme A to glucosamine-1-phosphate (GlcN-1-P) to produce N-acetylglucosamine-1-phosphate (GlcNAc-1-P), which is converted into UDP-GlcNAc by the transfer of uridine 5-monophosphate (from uridine 5-triphosphate), a reaction catalyzed by the N-terminal domain. The protein is Bifunctional protein GlmU of Rhodococcus opacus (strain B4).